Consider the following 252-residue polypeptide: Protein HEAT-INDUCED TAS1 TARGET 2 (252 aa).

It belongs to the heat induced plant HTT protein family. As to expression, expressed ubiquitously, including in seedlings, leaves, stems, inflorescences and siliques.

Its subcellular location is the cytoplasm. The protein resides in the nucleus. Mediates both basal and acquired thermotolerance via HSFA1s-directed pathways (e.g. HSFA1A, HSFA1B, and HSFA1D). Triggers the expression of HSFA1A and HSFA1B. In Arabidopsis thaliana (Mouse-ear cress), this protein is Protein HEAT-INDUCED TAS1 TARGET 2.